The primary structure comprises 425 residues: Serine--tRNA ligase (425 aa).

228-230 provides a ligand contact to L-serine; that stretch reads TAE. 259 to 261 is an ATP binding site; it reads RSE. An L-serine-binding site is contributed by Glu282. An ATP-binding site is contributed by 346–349; that stretch reads EIAS. Ser382 contacts L-serine.

This sequence belongs to the class-II aminoacyl-tRNA synthetase family. Type-1 seryl-tRNA synthetase subfamily. Homodimer. The tRNA molecule binds across the dimer.

It is found in the cytoplasm. The catalysed reaction is tRNA(Ser) + L-serine + ATP = L-seryl-tRNA(Ser) + AMP + diphosphate + H(+). It catalyses the reaction tRNA(Sec) + L-serine + ATP = L-seryl-tRNA(Sec) + AMP + diphosphate + H(+). Its pathway is aminoacyl-tRNA biosynthesis; selenocysteinyl-tRNA(Sec) biosynthesis; L-seryl-tRNA(Sec) from L-serine and tRNA(Sec): step 1/1. Its function is as follows. Catalyzes the attachment of serine to tRNA(Ser). Is also able to aminoacylate tRNA(Sec) with serine, to form the misacylated tRNA L-seryl-tRNA(Sec), which will be further converted into selenocysteinyl-tRNA(Sec). This chain is Serine--tRNA ligase, found in Rickettsia peacockii (strain Rustic).